The chain runs to 265 residues: Capsule polysaccharide export inner-membrane protein BexB (265 aa).

6 consecutive transmembrane segments (helical) span residues 37 to 57, 64 to 84, 118 to 138, 151 to 171, 178 to 198, and 235 to 255; these read IGFF…VMMW, KFST…AMMW, LLEV…LVMI, LIAW…ICAI, FGKI…AFFF, and ESIG…LVMV. An ABC transmembrane type-2 domain is found at 37 to 258; the sequence is IGFFWLFVEP…LLGLVMVKNF (222 aa).

This sequence belongs to the ABC-2 integral membrane protein family.

The protein localises to the cell inner membrane. In terms of biological role, may form an ATP-driven capsule polysaccharide export apparatus, in association with the BexA, BexC and BexD proteins. This Haemophilus influenzae protein is Capsule polysaccharide export inner-membrane protein BexB (bexB).